We begin with the raw amino-acid sequence, 316 residues long: Pantothenate kinase (316 aa).

95–102 (GSVAVGKS) lines the ATP pocket.

It belongs to the prokaryotic pantothenate kinase family.

The protein localises to the cytoplasm. It carries out the reaction (R)-pantothenate + ATP = (R)-4'-phosphopantothenate + ADP + H(+). It participates in cofactor biosynthesis; coenzyme A biosynthesis; CoA from (R)-pantothenate: step 1/5. This Salmonella choleraesuis (strain SC-B67) protein is Pantothenate kinase.